The chain runs to 102 residues: Iron-sulfur cluster assembly protein CyaY (102 aa).

The protein belongs to the frataxin family.

Involved in iron-sulfur (Fe-S) cluster assembly. May act as a regulator of Fe-S biogenesis. This is Iron-sulfur cluster assembly protein CyaY from Histophilus somni (strain 129Pt) (Haemophilus somnus).